Consider the following 252-residue polypeptide: Orotidine 5'-phosphate decarboxylase (252 aa).

Substrate is bound by residues aspartate 26, lysine 48, 75 to 84 (DLKFHDIPNT), threonine 135, arginine 196, glutamine 205, glycine 225, and arginine 226. Catalysis depends on lysine 77, which acts as the Proton donor.

This sequence belongs to the OMP decarboxylase family. Type 1 subfamily. As to quaternary structure, homodimer.

The enzyme catalyses orotidine 5'-phosphate + H(+) = UMP + CO2. It functions in the pathway pyrimidine metabolism; UMP biosynthesis via de novo pathway; UMP from orotate: step 2/2. In terms of biological role, catalyzes the decarboxylation of orotidine 5'-monophosphate (OMP) to uridine 5'-monophosphate (UMP). This chain is Orotidine 5'-phosphate decarboxylase, found in Sodalis glossinidius (strain morsitans).